Reading from the N-terminus, the 322-residue chain is MEWQTRFSPLNLSTQDALPELSISRLDHLGMITMVGDDKKSYLHGQVTCDVVSLEKDQSTLGAHCDAKGKVWSVFRLFHHGDGYGMIQPKSAIEIELKEIKKYAVFSKVTIEESNDVILGVAGVNADAFVSALNEDAGDVRIINGGTAVKVEANRWLLVVTEEAAQALIENSDATLTTRELWTRFDIESALPFVSATAQNEHIPQALNIQALGGISFTKGCYTGQETVARAKYRGTNKRAMYIVKGVTSTALNDDAIELERSVGDNWRSVGTLLTHYQFSDNQAMGLIVLPNNLDDDTRLRLTSQPDCEWTIAELPYSLDDE.

W182 serves as a coordination point for folate.

It belongs to the tRNA-modifying YgfZ family.

It localises to the cytoplasm. In terms of biological role, folate-binding protein involved in regulating the level of ATP-DnaA and in the modification of some tRNAs. It is probably a key factor in regulatory networks that act via tRNA modification, such as initiation of chromosomal replication. This is tRNA-modifying protein YgfZ from Vibrio parahaemolyticus serotype O3:K6 (strain RIMD 2210633).